We begin with the raw amino-acid sequence, 156 residues long: Transcription antitermination protein NusB (156 aa).

Belongs to the NusB family.

Functionally, involved in transcription antitermination. Required for transcription of ribosomal RNA (rRNA) genes. Binds specifically to the boxA antiterminator sequence of the ribosomal RNA (rrn) operons. This Rickettsia rickettsii (strain Iowa) protein is Transcription antitermination protein NusB.